Here is an 87-residue protein sequence, read N- to C-terminus: Beta-mammal toxin Css4 (87 aa).

The N-terminal stretch at 1-19 is a signal peptide; that stretch reads MNSLLMITACLALVGTVWA. The 66-residue stretch at 20–85 folds into the LCN-type CS-alpha/beta domain; it reads KEGYLVNSYT…VWPLPNKTCN (66 aa). Cystine bridges form between Cys31-Cys84, Cys35-Cys60, Cys44-Cys65, and Cys48-Cys67. An Asparagine amide modification is found at Asn85.

It belongs to the long (4 C-C) scorpion toxin superfamily. Sodium channel inhibitor family. Beta subfamily. Expressed by the venom gland.

The protein resides in the secreted. Functionally, beta toxins bind voltage-independently at site-4 of sodium channels (Nav) and shift the voltage of activation toward more negative potentials thereby affecting sodium channel activation and promoting spontaneous and repetitive firing. This toxin is active only on mammals. The sequence is that of Beta-mammal toxin Css4 from Centruroides suffusus (Durango bark scorpion).